A 503-amino-acid chain; its full sequence is Transcriptional regulator LovE (503 aa).

The zn(2)-C6 fungal-type DNA-binding region spans 35 to 67 (CDRCHAQKIKCTGNKEVTGRAPCQRCQQAGLRC). Disordered regions lie at residues 89-124 (ADPDPCLHMSSPPVPSQSLPLDVSESHSSNTSRQFL) and 331-358 (SHMSPLEGSRSQSPSRDDTSSSSGHSSV). Residues 339 to 357 (SRSQSPSRDDTSSSSGHSS) show a composition bias toward low complexity.

Its subcellular location is the nucleus. Its function is as follows. Transcription factor that regulates the expression of the he gene cluster that mediates the biosynthesis of lovastatin (also known as mevinolin, mevacor or monacolin K), a hypolipidemic inhibitor of (3S)-hydroxymethylglutaryl-coenzyme A (HMG-CoA) reductase (HMGR). The sequence is that of Transcriptional regulator LovE from Aspergillus terreus.